We begin with the raw amino-acid sequence, 109 residues long: UPF0060 membrane protein RC1_3291 (109 aa).

4 consecutive transmembrane segments (helical) span residues 4–24, 31–51, 59–79, and 88–108; these read IATY…FWAW, PLWL…LTRI, AYAA…WLVE, and TLGT…PRGG.

It belongs to the UPF0060 family.

It is found in the cell inner membrane. The sequence is that of UPF0060 membrane protein RC1_3291 from Rhodospirillum centenum (strain ATCC 51521 / SW).